A 303-amino-acid chain; its full sequence is Probable endonuclease 4 (303 aa).

9 residues coordinate Zn(2+): His-78, His-118, Glu-154, Asp-188, His-191, His-222, Asp-235, His-237, and Glu-267.

Belongs to the AP endonuclease 2 family. Zn(2+) is required as a cofactor.

The enzyme catalyses Endonucleolytic cleavage to 5'-phosphooligonucleotide end-products.. Functionally, endonuclease IV plays a role in DNA repair. It cleaves phosphodiester bonds at apurinic or apyrimidinic (AP) sites, generating a 3'-hydroxyl group and a 5'-terminal sugar phosphate. The protein is Probable endonuclease 4 of Mycoplasmoides gallisepticum (strain R(low / passage 15 / clone 2)) (Mycoplasma gallisepticum).